Consider the following 128-residue polypeptide: Anti-sigma-F factor antagonist RsfA (128 aa).

The region spanning 17-128 is the STAS domain; the sequence is LKATIQHHDS…PTTESALSAT (112 aa). A disulfide bridge links Cys-73 with Cys-109.

It belongs to the anti-sigma-factor antagonist family. As to quaternary structure, monomer. Interacts with anti-sigma-F factor RsbW (UsfX).

In terms of biological role, positive, redox-sensitive regulator of sigma-F (SigF) activity. When reduced binds to anti-sigma-F factor RsbW (UsfX) preventing its binding to SigF, thus activating transcription. In Mycobacterium tuberculosis (strain CDC 1551 / Oshkosh), this protein is Anti-sigma-F factor antagonist RsfA (rsfA).